The sequence spans 579 residues: Nuclear receptor coactivator 5 (579 aa).

Met1 is subject to N-acetylmethionine. Residues 1-78 are disordered; sequence MNTAPSRPSP…LRDHRDSRSV (78 aa). A transcription repression region spans residues 1-158; sequence MNTAPSRPSP…RDSFDGRGPP (158 aa). Thr3 bears the Phosphothreonine mark. Ser9, Ser21, Ser24, Ser29, and Ser34 each carry phosphoserine. Composition is skewed to basic and acidic residues over residues 11-62 and 68-78; these read TRRD…DLRD and DLRDHRDSRSV. Phosphoserine occurs at positions 96, 116, 126, 143, and 151. The segment at 148–173 is disordered; the sequence is YRDSFDGRGPPGPESQSRAKERLKRE. Over residues 164–173 the composition is skewed to basic and acidic residues; that stretch reads SRAKERLKRE. Thr274 bears the Phosphothreonine mark. The short motif at 345–349 is the LXXLL motif element; the sequence is LINLL. 3 disordered regions span residues 375 to 428, 444 to 537, and 560 to 579; these read MRSS…PTSQ, VTAN…NFDN, and QTTAQMGQPQAPMGSYQRHY. Ser378 carries the post-translational modification Phosphoserine. Thr379 bears the Phosphothreonine mark. Ser381 carries the post-translational modification Phosphoserine. Polar residues predominate over residues 395–413; sequence SGASLKTQPSSQPLQSGQV. Over residues 446 to 457 the composition is skewed to low complexity; that stretch reads ANSSSASPSVAA. The transcription activation stretch occupies residues 458-579; that stretch reads GNTPNQNFST…APMGSYQRHY (122 aa). Composition is skewed to polar residues over residues 459–485 and 520–537; these read NTPNQNFSTAANSQPQQRSQASGNQPP and SNMTSQRPVSSTGINFDN.

As to quaternary structure, binds HTATIP2/TIP30. Interacts with YLPM1. Forms a complex with ILF2, ILF3, YLPM1, KHDRBS1, RBMX and PPP1CA. As to expression, widely expressed.

It localises to the nucleus. Functionally, nuclear receptor coregulator that can have both coactivator and corepressor functions. Interacts with nuclear receptors for steroids (ESR1 and ESR2) independently of the steroid binding domain (AF-2) of the ESR receptors, and with the orphan nuclear receptor NR1D2. Involved in the coactivation of nuclear steroid receptors (ER) as well as the corepression of MYC in response to 17-beta-estradiol (E2). The protein is Nuclear receptor coactivator 5 (NCOA5) of Homo sapiens (Human).